The following is a 562-amino-acid chain: Calmodulin-binding protein 60 F (562 aa).

A disordered region spans residues Met-1–Glu-22. The segment at Met-5 to Lys-84 is calmodulin-binding. Residues His-12 to Glu-22 show a composition bias toward basic and acidic residues. Residues Glu-154–Asn-273 form a DNA-binding region.

It belongs to the plant ACBP60 protein family. Interacts with calmodulin (CaM).

The protein localises to the nucleus. Functionally, transcription activator that binds DNA in a sequence-specific manner, likely 5'-GAAATTTTGG-3', to promote the expression of target genes. The chain is Calmodulin-binding protein 60 F from Arabidopsis thaliana (Mouse-ear cress).